Reading from the N-terminus, the 195-residue chain is Glycerol-3-phosphate acyltransferase (195 aa).

Helical transmembrane passes span 7–27 (IFIL…SYVI), 52–72 (LALL…AIAQ), 80–100 (ILFL…YLFF), 113–133 (LIFI…ICFL), and 147–167 (LIAL…IFTI).

This sequence belongs to the PlsY family. As to quaternary structure, probably interacts with PlsX.

It is found in the cell inner membrane. The enzyme catalyses an acyl phosphate + sn-glycerol 3-phosphate = a 1-acyl-sn-glycero-3-phosphate + phosphate. Its pathway is lipid metabolism; phospholipid metabolism. Functionally, catalyzes the transfer of an acyl group from acyl-phosphate (acyl-PO(4)) to glycerol-3-phosphate (G3P) to form lysophosphatidic acid (LPA). This enzyme utilizes acyl-phosphate as fatty acyl donor, but not acyl-CoA or acyl-ACP. This is Glycerol-3-phosphate acyltransferase from Ehrlichia ruminantium (strain Welgevonden).